A 1414-amino-acid polypeptide reads, in one-letter code: MSRNNPPPVIITTDPDSPALHSAPSTPPPNQRPTPTLVIPGSPASESSHPESPQGNDPFRLSPNARLYPPGSGHSPTPSYSSALTPPSPTLTSSSSVHFSDELPTPSSPNPKTSLALRDNHPDARSGMETLQTVDENDPQRRHARGWSIGTWSSAAPTADGYSMKKPLIRTATGASEVDGDRGEDDANKKGKKDKKGKKGKKDKEEPPSAHLDPDKDKTDPTPFREKPSRLAMLVDPKSLEDLEKIGGVSGLLEGLGVDGEKGLAVGTDEGNAENGAPRSSADMPGGNGPQWRASMDRRRDIYGRNDLPRRKSKSLLLLMWLAFKDKVLILLSVAAVVSLALGLYQDLGTPPKIIYNDECPDGCEEAQVDWVEGVAIVVAIIIVVLVGSINDWQKERQFKKLNEKREDRNVKVIRGGSEMVINVKDVVVGDVCLLEPGEIIPVDGIFLRGHNVRCDESGATGESDAIKKFSYDECIKERDNLQPGQRQKKDCFLISGAKVLEGVGEYVVIAVGPTSFNGRIMMAMRGDADETPLQIKLNHLAELIAKLGGASGLLLFIALMIRFFVQLKTNPDRSANDKAQSFIQILIIAVTLVVVAVPEGLPLAVTLALAFATKRMTKQNLLVRVLGSCETMANATVVCTDKTGTLTQNEMTVVAGSLGVHGKFVKDLSDNASRSNANEGEGHSVHGDFSFDMSQLNDYASSSLQTLFNEAICINSTAFEDKNEEGKLNFVGSKTETALLRFAKDMEWPNYRQVRESAEIVQMIPFSSELKAMGVVVRKDDTYRLYLKGASEVLSNNCTRHVVVHQDGNKGDDIETTEFDDDTMSNISKTIIFYANQSLRTIALCYRDFESWPPAGTEKDGADEVPYEAIAKDMTLIAITGIEDPLRPGVREAVEKCQLAGVAVKMCTGDNVLTARSIASQCGIFTAGGVVMEGPLFRKLSDSDRLEIAPRLQILARSSPEDKRLLVKTLKSMGEVVGVTGDGTNDGPALKLANVGFAMGIAGTEVAKEASDIILMDDSFKNIVLAIMWGRCVNDSVKKFLQFQISVNITAVFITFISAVASSSEESVLTAVQLLWVNLIMDTFAALALATDPATESSLDRKPDRKNAPLITVEMFKMIMVQAIYQIIVCLVLHFAGLKILGLEDNDQNNTELGALVFNCFVFCQIFNQLNCRRLDRKLNVLEGFWRNWYFIIIFLIMVGGQILIVEVGGAAFQVTRLGGRDWGITLVIGALSLPIGALVRLTPTGPFARLLVKLHIYADPNKLPELSPEAEEEQYSYNPALSRVKDNLSTYARIRGGRLRASSMVAKSRNAQLRDADIQFPSLLTMVPTVIAGTVGAGAHWVTPHNSIGLSNPAGQDPSYSTAELFKGKVQLHPRTNPDDPLYAKFGLQPPESRGSSVSGAEGLSSGDANNV.

2 disordered regions span residues 1–231 (MSRN…PSRL) and 265–294 (AVGT…QWRA). The Cytoplasmic portion of the chain corresponds to 1–327 (MSRNNPPPVI…LLMWLAFKDK (327 aa)). Composition is skewed to low complexity over residues 33–53 (PTPT…PESP) and 75–96 (SPTP…SSSS). A compositionally biased stretch (basic and acidic residues) spans 179–189 (DGDRGEDDANK). Over residues 190-201 (KGKKDKKGKKGK) the composition is skewed to basic residues. Residues 202-229 (KDKEEPPSAHLDPDKDKTDPTPFREKPS) are compositionally biased toward basic and acidic residues. The helical transmembrane segment at 328–348 (VLILLSVAAVVSLALGLYQDL) threads the bilayer. The Vacuolar portion of the chain corresponds to 349-370 (GTPPKIIYNDECPDGCEEAQVD). The chain crosses the membrane as a helical span at residues 371–391 (WVEGVAIVVAIIIVVLVGSIN). The Cytoplasmic portion of the chain corresponds to 392–541 (DWQKERQFKK…TPLQIKLNHL (150 aa)). Residues 542-562 (AELIAKLGGASGLLLFIALMI) form a helical membrane-spanning segment. Over 563-585 (RFFVQLKTNPDRSANDKAQSFIQ) the chain is Vacuolar. A helical transmembrane segment spans residues 586-606 (ILIIAVTLVVVAVPEGLPLAV). The Ca(2+) site is built by valine 595 and glutamate 600. At 607-1040 (TLALAFATKR…GRCVNDSVKK (434 aa)) the chain is on the cytoplasmic side. Aspartate 642 functions as the 4-aspartylphosphate intermediate in the catalytic mechanism. Positions 642 and 644 each coordinate Mg(2+). Residues threonine 644, glutamate 737, arginine 779, 909-911 (TGD), arginine 958, and lysine 964 each bind ATP. Residue aspartate 983 participates in Mg(2+) binding. Residue asparagine 986 coordinates ATP. A helical transmembrane segment spans residues 1041 to 1061 (FLQFQISVNITAVFITFISAV). Asparagine 1049 is a Ca(2+) binding site. Residues 1062 to 1068 (ASSSEES) are Vacuolar-facing. A helical membrane pass occupies residues 1069–1089 (VLTAVQLLWVNLIMDTFAALA). Asparagine 1079 and aspartate 1083 together coordinate Ca(2+). The Cytoplasmic portion of the chain corresponds to 1090-1118 (LATDPATESSLDRKPDRKNAPLITVEMFK). Residues 1119 to 1139 (MIMVQAIYQIIVCLVLHFAGL) form a helical membrane-spanning segment. The Vacuolar portion of the chain corresponds to 1140 to 1153 (KILGLEDNDQNNTE). A helical transmembrane segment spans residues 1154–1171 (LGALVFNCFVFCQIFNQL). Residues 1172–1191 (NCRRLDRKLNVLEGFWRNWY) lie on the Cytoplasmic side of the membrane. A helical membrane pass occupies residues 1192 to 1212 (FIIIFLIMVGGQILIVEVGGA). Glutamate 1208 is a Ca(2+) binding site. At 1213-1223 (AFQVTRLGGRD) the chain is on the vacuolar side. A helical transmembrane segment spans residues 1224-1244 (WGITLVIGALSLPIGALVRLT). Residues 1245–1414 (PTGPFARLLV…GLSSGDANNV (170 aa)) lie on the Cytoplasmic side of the membrane. The tract at residues 1376-1414 (PRTNPDDPLYAKFGLQPPESRGSSVSGAEGLSSGDANNV) is disordered.

Belongs to the cation transport ATPase (P-type) (TC 3.A.3) family.

It localises to the vacuole membrane. The enzyme catalyses Ca(2+)(in) + ATP + H2O = Ca(2+)(out) + ADP + phosphate + H(+). This magnesium-dependent enzyme catalyzes the hydrolysis of ATP coupled with the transport of calcium. Transports calcium to the vacuole and participates in the control of cytosolic free calcium. This chain is Calcium-transporting ATPase 2, found in Cryptococcus neoformans var. grubii serotype A (strain H99 / ATCC 208821 / CBS 10515 / FGSC 9487) (Filobasidiella neoformans var. grubii).